The primary structure comprises 429 residues: Adenylosuccinate synthetase (429 aa).

Residues 13–19 (GDEGKGK) and 41–43 (GHT) each bind GTP. Asp14 functions as the Proton acceptor in the catalytic mechanism. Asp14 and Gly41 together coordinate Mg(2+). Residues 14 to 17 (DEGK), 39 to 42 (NAGH), Thr130, Arg144, Gln225, Thr240, and Arg304 each bind IMP. Residue His42 is the Proton donor of the active site. Position 300–306 (300–306 (ATTGRAR)) interacts with substrate. GTP-binding positions include Arg306, 332-334 (KLD), and 413-415 (STG).

Belongs to the adenylosuccinate synthetase family. Homodimer. Mg(2+) serves as cofactor.

It localises to the cytoplasm. It catalyses the reaction IMP + L-aspartate + GTP = N(6)-(1,2-dicarboxyethyl)-AMP + GDP + phosphate + 2 H(+). It functions in the pathway purine metabolism; AMP biosynthesis via de novo pathway; AMP from IMP: step 1/2. Its function is as follows. Plays an important role in the de novo pathway of purine nucleotide biosynthesis. Catalyzes the first committed step in the biosynthesis of AMP from IMP. The polypeptide is Adenylosuccinate synthetase (Pseudomonas fluorescens (strain SBW25)).